The sequence spans 467 residues: Glutamate--tRNA ligase (467 aa).

The 'HIGH' region signature appears at 9-19; the sequence is PSPTGYLHIGG. The short motif at 237–241 is the 'KMSKS' region element; sequence KLSKR. Lys-240 is an ATP binding site.

This sequence belongs to the class-I aminoacyl-tRNA synthetase family. Glutamate--tRNA ligase type 1 subfamily. In terms of assembly, monomer.

The protein resides in the cytoplasm. It carries out the reaction tRNA(Glu) + L-glutamate + ATP = L-glutamyl-tRNA(Glu) + AMP + diphosphate. Functionally, catalyzes the attachment of glutamate to tRNA(Glu) in a two-step reaction: glutamate is first activated by ATP to form Glu-AMP and then transferred to the acceptor end of tRNA(Glu). This is Glutamate--tRNA ligase from Xanthomonas euvesicatoria pv. vesicatoria (strain 85-10) (Xanthomonas campestris pv. vesicatoria).